A 124-amino-acid polypeptide reads, in one-letter code: Small ribosomal subunit protein uS13 (124 aa).

The tract at residues 95 to 124 (GLPVRGQRTKTNARTRKGPKRTIAGKKKAR) is disordered.

It belongs to the universal ribosomal protein uS13 family. In terms of assembly, part of the 30S ribosomal subunit. Forms a loose heterodimer with protein S19. Forms two bridges to the 50S subunit in the 70S ribosome.

Functionally, located at the top of the head of the 30S subunit, it contacts several helices of the 16S rRNA. In the 70S ribosome it contacts the 23S rRNA (bridge B1a) and protein L5 of the 50S subunit (bridge B1b), connecting the 2 subunits; these bridges are implicated in subunit movement. Contacts the tRNAs in the A and P-sites. The polypeptide is Small ribosomal subunit protein uS13 (Mycolicibacterium smegmatis (strain ATCC 700084 / mc(2)155) (Mycobacterium smegmatis)).